The sequence spans 397 residues: 1-deoxy-D-xylulose 5-phosphate reductoisomerase (397 aa).

The NADPH site is built by threonine 17, glycine 18, serine 19, isoleucine 20, asparagine 47, and asparagine 130. Lysine 131 contacts 1-deoxy-D-xylulose 5-phosphate. Glutamate 132 is a binding site for NADPH. Aspartate 156 is a Mn(2+) binding site. Positions 157, 158, 182, and 205 each coordinate 1-deoxy-D-xylulose 5-phosphate. A Mn(2+)-binding site is contributed by glutamate 158. Glycine 211 contacts NADPH. 1-deoxy-D-xylulose 5-phosphate is bound by residues serine 218, asparagine 223, lysine 224, and glutamate 227. Residue glutamate 227 coordinates Mn(2+).

Belongs to the DXR family. Mg(2+) serves as cofactor. Requires Mn(2+) as cofactor.

The enzyme catalyses 2-C-methyl-D-erythritol 4-phosphate + NADP(+) = 1-deoxy-D-xylulose 5-phosphate + NADPH + H(+). It functions in the pathway isoprenoid biosynthesis; isopentenyl diphosphate biosynthesis via DXP pathway; isopentenyl diphosphate from 1-deoxy-D-xylulose 5-phosphate: step 1/6. Its function is as follows. Catalyzes the NADPH-dependent rearrangement and reduction of 1-deoxy-D-xylulose-5-phosphate (DXP) to 2-C-methyl-D-erythritol 4-phosphate (MEP). The sequence is that of 1-deoxy-D-xylulose 5-phosphate reductoisomerase from Allorhizobium ampelinum (strain ATCC BAA-846 / DSM 112012 / S4) (Agrobacterium vitis (strain S4)).